The primary structure comprises 166 residues: Large ribosomal subunit protein uL10 (166 aa).

The protein belongs to the universal ribosomal protein uL10 family. As to quaternary structure, part of the ribosomal stalk of the 50S ribosomal subunit. The N-terminus interacts with L11 and the large rRNA to form the base of the stalk. The C-terminus forms an elongated spine to which L12 dimers bind in a sequential fashion forming a multimeric L10(L12)X complex.

Its function is as follows. Forms part of the ribosomal stalk, playing a central role in the interaction of the ribosome with GTP-bound translation factors. This chain is Large ribosomal subunit protein uL10, found in Streptococcus agalactiae serotype III (strain NEM316).